A 177-amino-acid chain; its full sequence is MIEIRFHGRGGQGAVTAAEILAKAAFEDGKYSQAFPFFGVERRGAPVMAFTRINDEPIRRRYQVYNPDYVVVLDEGLVDVVDVFSGLKEDGVVLLNTAGTFTSENAKIHTIDATGIALENLGRPIVNTVMLGAFAGVTGLVSIDSLIKIIKETFPGKIGDKNAEAARIAYEKMKHSG.

Heterotetramer of one alpha, one beta, one delta and one gamma chain.

The catalysed reaction is 2 oxidized [2Fe-2S]-[ferredoxin] + pyruvate + CoA = 2 reduced [2Fe-2S]-[ferredoxin] + acetyl-CoA + CO2 + H(+). The protein is Pyruvate synthase subunit PorC (porC) of Methanothermobacter marburgensis (strain ATCC BAA-927 / DSM 2133 / JCM 14651 / NBRC 100331 / OCM 82 / Marburg) (Methanobacterium thermoautotrophicum).